Consider the following 236-residue polypeptide: LexA repressor (236 aa).

Residues 1–25 (MNDSNDTSVAGGAAGADSRVLSADS) form a disordered region. The H-T-H motif DNA-binding region spans 51–71 (IREIGDAVGLTSTSSVAHQLR). Active-site for autocatalytic cleavage activity residues include Ser160 and Lys197.

It belongs to the peptidase S24 family. As to quaternary structure, homodimer.

The enzyme catalyses Hydrolysis of Ala-|-Gly bond in repressor LexA.. In terms of biological role, represses a number of genes involved in the response to DNA damage (SOS response), including recA and lexA. In the presence of single-stranded DNA, RecA interacts with LexA causing an autocatalytic cleavage which disrupts the DNA-binding part of LexA, leading to derepression of the SOS regulon and eventually DNA repair. In Mycobacterium bovis (strain BCG / Pasteur 1173P2), this protein is LexA repressor.